A 293-amino-acid polypeptide reads, in one-letter code: tRNA pseudouridine synthase B (293 aa).

The active-site Nucleophile is Asp-39.

Belongs to the pseudouridine synthase TruB family. Type 1 subfamily.

The enzyme catalyses uridine(55) in tRNA = pseudouridine(55) in tRNA. In terms of biological role, responsible for synthesis of pseudouridine from uracil-55 in the psi GC loop of transfer RNAs. This is tRNA pseudouridine synthase B from Streptococcus thermophilus (strain CNRZ 1066).